The chain runs to 381 residues: Creatine kinase B-type (381 aa).

Residues Lys-11–Gly-98 enclose the Phosphagen kinase N-terminal domain. Val-72 contacts creatine. Positions Tyr-125 to Leu-367 constitute a Phosphagen kinase C-terminal domain. ATP is bound by residues Ser-128 to Arg-132, Arg-130, Arg-132, and His-191. Glu-232 provides a ligand contact to creatine. Arg-236 contributes to the ATP binding site. Thr-282 carries the post-translational modification Phosphothreonine; by autocatalysis. Ser-285 lines the creatine pocket. A Phosphoserine; by autocatalysis modification is found at Ser-285. At Thr-289 the chain carries Phosphothreonine; by autocatalysis. Residues Arg-292, Arg-320, Arg-320–Val-325, and Asp-335 contribute to the ATP site.

This sequence belongs to the ATP:guanido phosphotransferase family. In terms of assembly, dimer of identical or non-identical chains, which can be either B (brain type) or M (muscle type). With MM being the major form in skeletal muscle and myocardium, MB existing in myocardium, and BB existing in many tissues, especially brain. Post-translationally, ba-CK and Bb-CK are phosphorylated. The N-terminus of BA-CK is blocked. In terms of tissue distribution, expressed in almost all tissues and found enriched in various region of the brain, retina, heart, gizzard, gut and sperm.

It localises to the cytoplasm. The protein localises to the cytosol. The protein resides in the mitochondrion. Its subcellular location is the cell membrane. It catalyses the reaction creatine + ATP = N-phosphocreatine + ADP + H(+). Reversibly catalyzes the transfer of phosphate between ATP and various phosphogens (e.g. creatine phosphate). Creatine kinase isoenzymes play a central role in energy transduction in tissues with large, fluctuating energy demands, such as skeletal muscle, heart, brain and spermatozoa. This Gallus gallus (Chicken) protein is Creatine kinase B-type.